The chain runs to 300 residues: Ribosome-inactivating protein 3 (300 aa).

Glutamate 207 is a catalytic residue.

Belongs to the ribosome-inactivating protein family. Type 1 RIP subfamily. Monomer. Accumulates to high levels in seeds.

Its subcellular location is the cytoplasm. It catalyses the reaction Endohydrolysis of the N-glycosidic bond at one specific adenosine on the 28S rRNA.. In terms of biological role, possesses features of some constitutive defense agent. The coordinate Opaque-2-controlled synthesis of this protein and the major seed storage proteins (zeins) may provide the germinating seedling with both nutritional benefits and protection against pathogen invasion of the surrounding endosperm. The polypeptide is Ribosome-inactivating protein 3 (CRIP3) (Zea mays (Maize)).